A 168-amino-acid polypeptide reads, in one-letter code: Crossover junction endodeoxyribonuclease RuvC (168 aa).

Residues Asp-8, Glu-68, and Asp-140 contribute to the active site. Mg(2+)-binding residues include Asp-8, Glu-68, and Asp-140.

Belongs to the RuvC family. As to quaternary structure, homodimer which binds Holliday junction (HJ) DNA. The HJ becomes 2-fold symmetrical on binding to RuvC with unstacked arms; it has a different conformation from HJ DNA in complex with RuvA. In the full resolvosome a probable DNA-RuvA(4)-RuvB(12)-RuvC(2) complex forms which resolves the HJ. Mg(2+) is required as a cofactor.

It is found in the cytoplasm. The catalysed reaction is Endonucleolytic cleavage at a junction such as a reciprocal single-stranded crossover between two homologous DNA duplexes (Holliday junction).. Functionally, the RuvA-RuvB-RuvC complex processes Holliday junction (HJ) DNA during genetic recombination and DNA repair. Endonuclease that resolves HJ intermediates. Cleaves cruciform DNA by making single-stranded nicks across the HJ at symmetrical positions within the homologous arms, yielding a 5'-phosphate and a 3'-hydroxyl group; requires a central core of homology in the junction. The consensus cleavage sequence is 5'-(A/T)TT(C/G)-3'. Cleavage occurs on the 3'-side of the TT dinucleotide at the point of strand exchange. HJ branch migration catalyzed by RuvA-RuvB allows RuvC to scan DNA until it finds its consensus sequence, where it cleaves and resolves the cruciform DNA. The polypeptide is Crossover junction endodeoxyribonuclease RuvC (Gluconacetobacter diazotrophicus (strain ATCC 49037 / DSM 5601 / CCUG 37298 / CIP 103539 / LMG 7603 / PAl5)).